Consider the following 185-residue polypeptide: Elongation factor P (185 aa).

The protein belongs to the elongation factor P family.

The protein localises to the cytoplasm. Its pathway is protein biosynthesis; polypeptide chain elongation. Functionally, involved in peptide bond synthesis. Stimulates efficient translation and peptide-bond synthesis on native or reconstituted 70S ribosomes in vitro. Probably functions indirectly by altering the affinity of the ribosome for aminoacyl-tRNA, thus increasing their reactivity as acceptors for peptidyl transferase. In Pelotomaculum thermopropionicum (strain DSM 13744 / JCM 10971 / SI), this protein is Elongation factor P.